The primary structure comprises 394 residues: Tubulin-like protein CetZ4 (394 aa).

GTP contacts are provided by residues 10 to 14 (QAGGK), 110 to 112 (GTG), Glu-142, Asn-169, and Asn-187.

Belongs to the CetZ family.

The protein resides in the cytoplasm. Its function is as follows. Involved in cell shape control. The sequence is that of Tubulin-like protein CetZ4 from Haloferax volcanii (strain ATCC 29605 / DSM 3757 / JCM 8879 / NBRC 14742 / NCIMB 2012 / VKM B-1768 / DS2) (Halobacterium volcanii).